The primary structure comprises 242 residues: Cysteine-rich venom protein helothermine (242 aa).

The N-terminal stretch at 1-19 (MILLSLYLCLAAMLHQSEG) is a signal peptide. In terms of domain architecture, SCP spans 41-169 (DKHNNLRRIV…TYKYYQVCQY (129 aa)). Intrachain disulfides connect cysteine 77-cysteine 155, cysteine 94-cysteine 170, cysteine 150-cysteine 167, cysteine 189-cysteine 196, cysteine 192-cysteine 201, cysteine 205-cysteine 237, cysteine 214-cysteine 231, and cysteine 223-cysteine 235. One can recognise a ShKT domain in the interval 205-237 (CKQNDVYNNCPDLKKQVGCGHPIMKDCMATCKC).

It belongs to the CRISP family. As to expression, expressed by the venom gland.

It is found in the secreted. Functionally, alters a variety of ion channel activities, including voltage-gated potassium channels (Kv), voltage-gated calcium channels (L-, N-, and P-type) (Cav) and ryanodine receptors (RyR). Is toxic to mice (causes lethargy, partial paralysis of rear limbs and lowering of body temperature). The protein is Cysteine-rich venom protein helothermine of Heloderma horridum horridum (Mexican beaded lizard).